The primary structure comprises 256 residues: Phosphatidylglycerol--prolipoprotein diacylglyceryl transferase (256 aa).

3 helical membrane passes run 19 to 39, 56 to 76, and 91 to 111; these read VHWY…LGYW, LIFY…MLFY, and IWEG…AAWL. Arginine 139 contacts a 1,2-diacyl-sn-glycero-3-phospho-(1'-sn-glycerol). Residues 231–251 traverse the membrane as a helical segment; sequence FGWLTMGQVLSIPMLLIGIWL.

The protein belongs to the Lgt family.

The protein localises to the cell inner membrane. It carries out the reaction L-cysteinyl-[prolipoprotein] + a 1,2-diacyl-sn-glycero-3-phospho-(1'-sn-glycerol) = an S-1,2-diacyl-sn-glyceryl-L-cysteinyl-[prolipoprotein] + sn-glycerol 1-phosphate + H(+). The protein operates within protein modification; lipoprotein biosynthesis (diacylglyceryl transfer). In terms of biological role, catalyzes the transfer of the diacylglyceryl group from phosphatidylglycerol to the sulfhydryl group of the N-terminal cysteine of a prolipoprotein, the first step in the formation of mature lipoproteins. The polypeptide is Phosphatidylglycerol--prolipoprotein diacylglyceryl transferase (Legionella pneumophila (strain Corby)).